The sequence spans 37 residues: MVEPLLSGIVLGLVPVTIAGLFVTAYLQYRRGDQATW.

A helical membrane pass occupies residues 5-25 (LLSGIVLGLVPVTIAGLFVTA).

Belongs to the PetG family. In terms of assembly, the 4 large subunits of the cytochrome b6-f complex are cytochrome b6, subunit IV (17 kDa polypeptide, PetD), cytochrome f and the Rieske protein, while the 4 small subunits are PetG, PetL, PetM and PetN. The complex functions as a dimer.

It is found in the plastid. Its subcellular location is the chloroplast thylakoid membrane. In terms of biological role, component of the cytochrome b6-f complex, which mediates electron transfer between photosystem II (PSII) and photosystem I (PSI), cyclic electron flow around PSI, and state transitions. PetG is required for either the stability or assembly of the cytochrome b6-f complex. The chain is Cytochrome b6-f complex subunit 5 from Stigeoclonium helveticum (Green alga).